The sequence spans 128 residues: MALQVRVAPSKVVLQKFLLCVILFYTVYYVSLSMGCVMFEVHELNVLAPFDFKTNPSWLNINYKVLLVSTEVTYFVCGLFFVPVVEEWVWDYAISVTILHVAITSTVMLEFPLTSHWWAALGISKLLV.

3 consecutive transmembrane segments (helical) span residues 17–37, 65–85, and 93–113; these read FLLC…MGCV, VLLV…VPVV, and AISV…EFPL.

It localises to the membrane. The chain is Putative transmembrane protein 244 (TMEM244) from Homo sapiens (Human).